A 245-amino-acid chain; its full sequence is Small ribosomal subunit protein uS3 (245 aa).

Positions 39 to 107 (IRKAIREKLK…EVRVNLVEIR (69 aa)) constitute a KH type-2 domain. Positions 216–245 (DKRLETSGQSRARANTNQRGPASGAQAAGA) are disordered. Polar residues predominate over residues 221–235 (TSGQSRARANTNQRG).

Belongs to the universal ribosomal protein uS3 family. In terms of assembly, part of the 30S ribosomal subunit. Forms a tight complex with proteins S10 and S14.

Binds the lower part of the 30S subunit head. Binds mRNA in the 70S ribosome, positioning it for translation. In Hyphomonas neptunium (strain ATCC 15444), this protein is Small ribosomal subunit protein uS3.